The following is a 182-amino-acid chain: MIFDEFSIKTLIRPVPDFPKPGVVFRDITPLFQSPRALRMVADSFIQRYVEAEFSHIGAMDARGFLIGSIIAYELNKPLILFRKQGKLPADVLSESYQTEYGEAFLEVHSDSLCEGDSVLIFDDLIATGGTLIAAANLVRRMRASVFEAAAIIDLPELGGSQKLQDAAIPTFTLTAFALDDR.

The protein belongs to the purine/pyrimidine phosphoribosyltransferase family. In terms of assembly, homodimer.

The protein localises to the cytoplasm. It carries out the reaction AMP + diphosphate = 5-phospho-alpha-D-ribose 1-diphosphate + adenine. The protein operates within purine metabolism; AMP biosynthesis via salvage pathway; AMP from adenine: step 1/1. Catalyzes a salvage reaction resulting in the formation of AMP, that is energically less costly than de novo synthesis. In Ectopseudomonas mendocina (strain ymp) (Pseudomonas mendocina), this protein is Adenine phosphoribosyltransferase.